Reading from the N-terminus, the 65-residue chain is Large ribosomal subunit protein bL35 (65 aa).

Belongs to the bacterial ribosomal protein bL35 family.

In Thermus thermophilus (strain ATCC BAA-163 / DSM 7039 / HB27), this protein is Large ribosomal subunit protein bL35.